The chain runs to 611 residues: Elongation factor 4 1 (611 aa).

The tr-type G domain occupies 11-193; the sequence is QHIRNFSIVA…QIVHKIPAPQ (183 aa). GTP-binding positions include 23–28 and 140–143; these read DHGKST and NKID.

This sequence belongs to the TRAFAC class translation factor GTPase superfamily. Classic translation factor GTPase family. LepA subfamily.

It localises to the cell membrane. The catalysed reaction is GTP + H2O = GDP + phosphate + H(+). In terms of biological role, required for accurate and efficient protein synthesis under certain stress conditions. May act as a fidelity factor of the translation reaction, by catalyzing a one-codon backward translocation of tRNAs on improperly translocated ribosomes. Back-translocation proceeds from a post-translocation (POST) complex to a pre-translocation (PRE) complex, thus giving elongation factor G a second chance to translocate the tRNAs correctly. Binds to ribosomes in a GTP-dependent manner. This Lactiplantibacillus plantarum (strain ATCC BAA-793 / NCIMB 8826 / WCFS1) (Lactobacillus plantarum) protein is Elongation factor 4 1.